We begin with the raw amino-acid sequence, 467 residues long: L-seryl-tRNA(Sec) selenium transferase (467 aa).

K298 is subject to N6-(pyridoxal phosphate)lysine.

It belongs to the SelA family. The cofactor is pyridoxal 5'-phosphate.

It is found in the cytoplasm. The catalysed reaction is L-seryl-tRNA(Sec) + selenophosphate + H(+) = L-selenocysteinyl-tRNA(Sec) + phosphate. Its pathway is aminoacyl-tRNA biosynthesis; selenocysteinyl-tRNA(Sec) biosynthesis; selenocysteinyl-tRNA(Sec) from L-seryl-tRNA(Sec) (bacterial route): step 1/1. Converts seryl-tRNA(Sec) to selenocysteinyl-tRNA(Sec) required for selenoprotein biosynthesis. The chain is L-seryl-tRNA(Sec) selenium transferase from Alkaliphilus oremlandii (strain OhILAs) (Clostridium oremlandii (strain OhILAs)).